A 60-amino-acid chain; its full sequence is Large ribosomal subunit protein bL32 (60 aa).

A compositionally biased stretch (basic residues) spans 1 to 16 (MAVPKKKTSKSRKNMR). A disordered region spans residues 1–20 (MAVPKKKTSKSRKNMRRAHD).

Belongs to the bacterial ribosomal protein bL32 family.

This chain is Large ribosomal subunit protein bL32, found in Geobacter metallireducens (strain ATCC 53774 / DSM 7210 / GS-15).